Reading from the N-terminus, the 441-residue chain is tRNA modification GTPase MnmE (441 aa).

(6S)-5-formyl-5,6,7,8-tetrahydrofolate contacts are provided by R22, E80, and K118. A TrmE-type G domain is found at 213–366 (GIYIAIVGEP…LLNLIKQRVE (154 aa)). GTP is bound by residues 223-228 (NSGKST), 242-248 (SEYAGTT), and 267-270 (DTAG). Positions 227 and 248 each coordinate Mg(2+). K441 lines the (6S)-5-formyl-5,6,7,8-tetrahydrofolate pocket.

This sequence belongs to the TRAFAC class TrmE-Era-EngA-EngB-Septin-like GTPase superfamily. TrmE GTPase family. As to quaternary structure, homodimer. Heterotetramer of two MnmE and two MnmG subunits. It depends on K(+) as a cofactor.

It is found in the cytoplasm. Functionally, exhibits a very high intrinsic GTPase hydrolysis rate. Involved in the addition of a carboxymethylaminomethyl (cmnm) group at the wobble position (U34) of certain tRNAs, forming tRNA-cmnm(5)s(2)U34. This chain is tRNA modification GTPase MnmE, found in Ehrlichia canis (strain Jake).